Consider the following 140-residue polypeptide: Nucleoside diphosphate kinase (140 aa).

Residues Lys11, Phe59, Arg87, Thr93, Arg104, and Asn114 each contribute to the ATP site. The active-site Pros-phosphohistidine intermediate is His117.

Belongs to the NDK family. Homotetramer. It depends on Mg(2+) as a cofactor.

The protein localises to the cytoplasm. It catalyses the reaction a 2'-deoxyribonucleoside 5'-diphosphate + ATP = a 2'-deoxyribonucleoside 5'-triphosphate + ADP. The catalysed reaction is a ribonucleoside 5'-diphosphate + ATP = a ribonucleoside 5'-triphosphate + ADP. Its function is as follows. Major role in the synthesis of nucleoside triphosphates other than ATP. The ATP gamma phosphate is transferred to the NDP beta phosphate via a ping-pong mechanism, using a phosphorylated active-site intermediate. This Rhodopseudomonas palustris (strain BisB5) protein is Nucleoside diphosphate kinase.